A 98-amino-acid chain; its full sequence is Putative transcriptional regulator YdaS (98 aa).

Functionally, when overexpressed, it induces Rac prophage excision, possibly to counteract the lethal toxicity of YdaT. Overexpression of ydaS or ydaST reduces growth and leads to loss of cell viability. May contribute to toxicity and morphological defects. The protein is Putative transcriptional regulator YdaS (ydaS) of Escherichia coli (strain K12).